A 566-amino-acid chain; its full sequence is MSKISRQAYAEIFGPTTGDRLRLADTELFIEIEKDFTTYGEEVKFGGGKVIRDGMGQSQRNYKDVMDTVITNAVIVEHWGIVKADIGLKGGKIAGIGKAGNPDIQPDVTMAIGGATEIIAGEGMIVTAGGVDTHIHFICPQQIEEALMSGVTTMIGGGTGPAVGTAATTCTPGPWHIHSMLSAADAFPMNLGFLGKGNVSLPTPLEEQIHAGAIGLKLHEDWGSTPAAIDNCLSVADRLDVQVAIHSDTLNEGGFLEHTLAAFKDRTIHTFHTEGAGGGHAPDIIAAVGQANVLPSSTNPTRPFTVNTLDEHLDMLMVCHHLDPAIAEDVAFAESRIRRETIAAEDILHDIGAISMMSSDSQAMGRVGEVIMRTWQTAHKMKVQRGSLAGDPARNDNFRVKRYIAKYTINPAITHGISHVVGSLEVGKVADIVLWKPAFFGVKPSMILKSGMIAAAQMGDPNASIPTPQPVHYRMMFGAYGGGLKTSMTFVSQSAFDAGIGDMLKLNKPVVAVKNMRHLRKRDMIHNSATPKMEVDSETYEVRADGELLVCEPAKILPLAQRYFLF.

A Urease domain is found at 129–566 (GGVDTHIHFI…LPLAQRYFLF (438 aa)). Residues H134, H136, and K217 each coordinate Ni(2+). The residue at position 217 (K217) is an N6-carboxylysine. H219 contributes to the substrate binding site. Positions 246 and 272 each coordinate Ni(2+). H320 (proton donor) is an active-site residue. Ni(2+) is bound at residue D360.

This sequence belongs to the metallo-dependent hydrolases superfamily. Urease alpha subunit family. Heterotrimer of UreA (gamma), UreB (beta) and UreC (alpha) subunits. Three heterotrimers associate to form the active enzyme. The cofactor is Ni cation. Carboxylation allows a single lysine to coordinate two nickel ions.

It is found in the cytoplasm. It catalyses the reaction urea + 2 H2O + H(+) = hydrogencarbonate + 2 NH4(+). The protein operates within nitrogen metabolism; urea degradation; CO(2) and NH(3) from urea (urease route): step 1/1. The polypeptide is Urease subunit alpha (Janthinobacterium sp. (strain Marseille) (Minibacterium massiliensis)).